The following is a 204-amino-acid chain: Prephenate decarboxylase (204 aa).

This sequence belongs to the prephenate decarboxylase family.

The protein resides in the cytoplasm. It carries out the reaction prephenate + H(+) = 3-[(4R)-4-hydroxycyclohexa-1,5-dien-1-yl]-2-oxopropanoate + CO2. Its pathway is antibiotic biosynthesis; bacilysin biosynthesis. Part of the bacABCDEF operon responsible for the biosynthesis of the nonribosomally synthesized dipeptide antibiotic bacilysin, composed of L-alanine and L-anticapsin. Bacilysin is an irreversible inactivator of the glutaminase domain of glucosamine synthetase. BacA is an unusual prephenate decarboxylase that avoids the typical aromatization of the cyclohexadienol ring of prephenate. BacA catalyzes the protonation of prephenate (1-carboxy-4-hydroxy-alpha-oxo-2,5-cyclohexadiene-1-propanoic acid) at C6 position, followed by a decarboxylation to produce the endocyclic-delta(4),delta(8)-7R-dihydro-hydroxyphenylpyruvate (en-H2HPP). En-H2HPP is able to undergo a slow nonenzymatic isomerization to produce the exocyclic-delta(3),delta(5)-dihydro-hydroxyphenylpyruvate (ex-H2HPP). BacA isomerizes only the pro-R double bond in prephenate. This is Prephenate decarboxylase from Bacillus amyloliquefaciens (Bacillus velezensis).